Here is a 2149-residue protein sequence, read N- to C-terminus: Non-reducing polyketide synthase PvBS090_009107 (2149 aa).

Positions 8 to 244 (YLFGDQTGEF…VRVPVHAPYH (237 aa)) are N-terminal acylcarrier protein transacylase domain (SAT). Positions 375-806 (QSKIAIIGLS…GGNTALLIED (432 aa)) constitute a Ketosynthase family 3 (KS3) domain. Catalysis depends on for beta-ketoacyl synthase activity residues cysteine 547, histidine 682, and histidine 724. The interval 911–1231 (FVFTGQGAQY…LSAIYLAGVD (321 aa)) is malonyl-CoA:ACP transacylase (MAT) domain. The active-site For acyl/malonyl transferase activity is the serine 1000. The tract at residues 1290–1604 (TTSVQRIVET…RQVLNTVLPP (315 aa)) is product template (PT) domain. Residues 1294-1426 (QRIVETRDEG…CLVKFSDTHL (133 aa)) form an N-terminal hotdog fold region. The PKS/mFAS DH domain maps to 1294–1599 (QRIVETRDEG…FQGVPRQVLN (306 aa)). The Proton acceptor; for dehydratase activity role is filled by histidine 1326. Residues 1454–1599 (SHRMHRGMFY…FQGVPRQVLN (146 aa)) are C-terminal hotdog fold. The active-site Proton donor; for dehydratase activity is the aspartate 1512. The disordered stretch occupies residues 1604–1631 (PAGGSKAAPRTTARAVPPPPINVEKPKS). Residues 1649–1726 (SAGPSVLVQA…DLKQLLSQAS (78 aa)) enclose the Carrier 1 domain. Serine 1686 bears the O-(pantetheine 4'-phosphoryl)serine mark. 2 stretches are compositionally biased toward low complexity: residues 1722 to 1731 (LSQASPSDSS) and 1744 to 1755 (SSSTEPSTPGTP). The disordered stretch occupies residues 1722-1763 (LSQASPSDSSDSSEESHYSFRDSSSTEPSTPGTPAFFSPKRG). A Carrier 2 domain is found at 1769 to 1846 (VGESETIKTI…AVETALDLKP (78 aa)). An O-(pantetheine 4'-phosphoryl)serine modification is found at serine 1806. The thioesterase (TE) domain stretch occupies residues 1875–2147 (STHPPATSIL…KLSAFIGRAM (273 aa)). Serine 1965 functions as the For thioesterase activity in the catalytic mechanism.

The catalysed reaction is 6 malonyl-CoA + acetyl-CoA + 6 H(+) = naphtopyrone YWA1 + 6 CO2 + 7 CoA + H2O. The protein operates within secondary metabolite biosynthesis. It participates in pigment biosynthesis. In terms of biological role, non-reducing polyketide synthase; part of the gene cluster 24 that mediates the biosynthesis of a pigment with an aromatic structure protecting the pigmented fungus from both ionizing and non-ionizing radiations based on a mechanism similar to melanin, that is, free radical quenching and spherical spatial arrangement. Catalyzes the biosynthesis of the gamma-naphthopyrone precursor YWA1, via condensation of one acetyl-CoA starter unit with 6 malonyl-CoA units. YWA1 is probably further processed by the additional enzymes present within the cluster 24, however these additional steps have not been characterized yet. YWA1 is not converted to DHN-melanin in Byssochlamys spectabilis since the use of the DHN-melanin pathway inhibitor pyroquilon does not result in a loss of pigmentation. This Byssochlamys spectabilis (Paecilomyces variotii) protein is Non-reducing polyketide synthase PvBS090_009107.